Reading from the N-terminus, the 330-residue chain is tRNA-modifying protein YgfZ (330 aa).

Folate-binding residues include Trp-28 and Trp-190.

It belongs to the tRNA-modifying YgfZ family.

It localises to the cytoplasm. Its function is as follows. Folate-binding protein involved in regulating the level of ATP-DnaA and in the modification of some tRNAs. It is probably a key factor in regulatory networks that act via tRNA modification, such as initiation of chromosomal replication. The polypeptide is tRNA-modifying protein YgfZ (Yersinia pseudotuberculosis serotype IB (strain PB1/+)).